The sequence spans 69 residues: Putative membrane protein insertion efficiency factor (69 aa).

Belongs to the UPF0161 family.

The protein resides in the cell inner membrane. Its function is as follows. Could be involved in insertion of integral membrane proteins into the membrane. In Laribacter hongkongensis (strain HLHK9), this protein is Putative membrane protein insertion efficiency factor.